The following is a 364-amino-acid chain: Carbamoyl phosphate synthase small chain (364 aa).

CPSase regions lie at residues 1-167 and 1-171; these read MKRQ…PSPG and MKRQ…RGER. 3 residues coordinate L-glutamine: S45, G219, and G221. One can recognise a Glutamine amidotransferase type-1 domain in the interval 171 to 358; sequence RIVLIDFGMK…LALIREFNKK (188 aa). Catalysis depends on C246, which acts as the Nucleophile. L-glutamine-binding residues include L247, Q250, N288, G290, and Y291. Residues H331 and E333 contribute to the active site.

It belongs to the CarA family. Composed of two chains; the small (or glutamine) chain promotes the hydrolysis of glutamine to ammonia, which is used by the large (or ammonia) chain to synthesize carbamoyl phosphate. Tetramer of heterodimers (alpha,beta)4.

It catalyses the reaction hydrogencarbonate + L-glutamine + 2 ATP + H2O = carbamoyl phosphate + L-glutamate + 2 ADP + phosphate + 2 H(+). The catalysed reaction is L-glutamine + H2O = L-glutamate + NH4(+). Its pathway is amino-acid biosynthesis; L-arginine biosynthesis; carbamoyl phosphate from bicarbonate: step 1/1. It functions in the pathway pyrimidine metabolism; UMP biosynthesis via de novo pathway; (S)-dihydroorotate from bicarbonate: step 1/3. In terms of biological role, small subunit of the glutamine-dependent carbamoyl phosphate synthetase (CPSase). CPSase catalyzes the formation of carbamoyl phosphate from the ammonia moiety of glutamine, carbonate, and phosphate donated by ATP, constituting the first step of 2 biosynthetic pathways, one leading to arginine and/or urea and the other to pyrimidine nucleotides. The small subunit (glutamine amidotransferase) binds and cleaves glutamine to supply the large subunit with the substrate ammonia. The protein is Carbamoyl phosphate synthase small chain of Bacillus caldolyticus.